A 399-amino-acid polypeptide reads, in one-letter code: Nicotinate phosphoribosyltransferase (399 aa).

A Phosphohistidine; by autocatalysis modification is found at His-224.

The protein belongs to the NAPRTase family. Post-translationally, transiently phosphorylated on a His residue during the reaction cycle. Phosphorylation strongly increases the affinity for substrates and increases the rate of nicotinate D-ribonucleotide production. Dephosphorylation regenerates the low-affinity form of the enzyme, leading to product release.

The catalysed reaction is nicotinate + 5-phospho-alpha-D-ribose 1-diphosphate + ATP + H2O = nicotinate beta-D-ribonucleotide + ADP + phosphate + diphosphate. It functions in the pathway cofactor biosynthesis; NAD(+) biosynthesis; nicotinate D-ribonucleotide from nicotinate: step 1/1. Its function is as follows. Catalyzes the synthesis of beta-nicotinate D-ribonucleotide from nicotinate and 5-phospho-D-ribose 1-phosphate at the expense of ATP. This chain is Nicotinate phosphoribosyltransferase, found in Ectopseudomonas mendocina (strain ymp) (Pseudomonas mendocina).